The primary structure comprises 334 residues: Probable tRNA pseudouridine synthase B (334 aa).

The active-site Nucleophile is the D82. Residues 250 to 325 (LPKIWIKDSA…IAVDVEKVFM (76 aa)) enclose the PUA domain.

Belongs to the pseudouridine synthase TruB family. Type 2 subfamily.

It catalyses the reaction uridine(55) in tRNA = pseudouridine(55) in tRNA. Could be responsible for synthesis of pseudouridine from uracil-55 in the psi GC loop of transfer RNAs. This Pyrococcus horikoshii (strain ATCC 700860 / DSM 12428 / JCM 9974 / NBRC 100139 / OT-3) protein is Probable tRNA pseudouridine synthase B.